The chain runs to 569 residues: Proline--tRNA ligase (569 aa).

This sequence belongs to the class-II aminoacyl-tRNA synthetase family. ProS type 1 subfamily. As to quaternary structure, homodimer.

It localises to the cytoplasm. It carries out the reaction tRNA(Pro) + L-proline + ATP = L-prolyl-tRNA(Pro) + AMP + diphosphate. Catalyzes the attachment of proline to tRNA(Pro) in a two-step reaction: proline is first activated by ATP to form Pro-AMP and then transferred to the acceptor end of tRNA(Pro). As ProRS can inadvertently accommodate and process non-cognate amino acids such as alanine and cysteine, to avoid such errors it has two additional distinct editing activities against alanine. One activity is designated as 'pretransfer' editing and involves the tRNA(Pro)-independent hydrolysis of activated Ala-AMP. The other activity is designated 'posttransfer' editing and involves deacylation of mischarged Ala-tRNA(Pro). The misacylated Cys-tRNA(Pro) is not edited by ProRS. The protein is Proline--tRNA ligase of Nitrosospira multiformis (strain ATCC 25196 / NCIMB 11849 / C 71).